Here is a 541-residue protein sequence, read N- to C-terminus: Atlastin-3 (541 aa).

The interval M1 to G22 is disordered. The tract at residues M1–G25 is N-terminal hypervariable region (HVR). Topologically, residues M1 to A445 are cytoplasmic. Residues D57–K305 form the GB1/RHD3-type G domain. Positions 70, 71, 72, 73, 74, 75, and 109 each coordinate GDP. D142 is a Mg(2+) binding site. Residues R213, D214, V272, and S275 each coordinate GDP. Residues M343–S434 are 3HB (three-helix bundle) domain. K391 carries the N6-acetyllysine modification. A helical membrane pass occupies residues V446–L466. Position 467 (E467) is a topological domain, lumenal. The helical transmembrane segment at V468–G488 threads the bilayer. Over Y489–Q541 the chain is Cytoplasmic.

Belongs to the TRAFAC class dynamin-like GTPase superfamily. GB1/RHD3 GTPase family. GB1 subfamily. In terms of assembly, monomeric and homodimeric. The homodimer, transiently formed by two molecules on opposing membranes, is the active form mediating ER membrane fusion. Interacts with ZFYVE27; both proteins are involved in endoplasmic reticulum tubular network organization. Interacts with REEP5; both proteins are involved in endoplasmic reticulum tubular network organization. Expressed in cardiomyocytes (at protein level).

Its subcellular location is the endoplasmic reticulum membrane. The catalysed reaction is GTP + H2O = GDP + phosphate + H(+). In terms of biological role, atlastin-3 (ATL3) is a membrane-anchored GTPase that mediates the GTP-dependent fusion of endoplasmic reticulum (ER) membranes, maintaining the continuous ER network. It facilitates the formation of three-way junctions where ER tubules intersect. Two atlastin-3 on neighboring ER tubules bind GTP and form loose homodimers through the GB1/RHD3-type G domains and 3HB regions. Upon GTP hydrolysis, the 3HB regions tighten, pulling the membranes together to drive their fusion. After fusion, the homodimer disassembles upon release of inorganic phosphate (Pi). Subsequently, GDP dissociates, resetting the monomers to a conformation ready for a new fusion cycle. The protein is Atlastin-3 of Mus musculus (Mouse).